The sequence spans 92 residues: UPF0298 protein ABC2380 (92 aa).

It belongs to the UPF0298 family.

The protein localises to the cytoplasm. This chain is UPF0298 protein ABC2380, found in Shouchella clausii (strain KSM-K16) (Alkalihalobacillus clausii).